A 61-amino-acid chain; its full sequence is DNA-binding protein 7a (61 aa).

The interval 37 to 61 (NGKTGRGAVSEKDAPKELLEKLEKK) is disordered. Basic and acidic residues predominate over residues 45–61 (VSEKDAPKELLEKLEKK).

It belongs to the 7 kDa DNA-binding/endoribonuclease P2 family. As to quaternary structure, monomer.

Its subcellular location is the cytoplasm. Functionally, can constrain negative DNA supercoils. May be involved in maintaining the integrity of the genome at high temperature. This chain is DNA-binding protein 7a, found in Acidianus hospitalis (strain W1).